The sequence spans 324 residues: Calpain-2 catalytic subunit (324 aa).

Positions Tyr-1 to Asp-138 are domain III. Residues Glu-139–Asp-153 are linker. The tract at residues Phe-158–Leu-324 is domain IV. Residues Ala-166, Asp-169, Glu-171, Glu-176, Asp-209, Asp-211, Ser-213, Lys-215, Glu-220, Asp-239, Asp-241, Ser-243, Thr-245, Glu-250, Asp-282, and Asn-285 each coordinate Ca(2+). EF-hand domains follow at residues Asp-190–Leu-224 and Thr-226–Lys-261.

Belongs to the peptidase C2 family. In terms of assembly, forms a heterodimer with a small (regulatory) subunit (CAPNS1). Interacts with CPEB3; this leads to cleavage of CPEB3. Requires Ca(2+) as cofactor. Ubiquitous.

It is found in the cytoplasm. It localises to the cell membrane. It catalyses the reaction Broad endopeptidase specificity.. Activated by 200-1000 micromolar concentrations of calcium and inhibited by calpastatin. Functionally, calcium-regulated non-lysosomal thiol-protease which catalyzes limited proteolysis of substrates involved in cytoskeletal remodeling and signal transduction. Proteolytically cleaves MYOC at 'Arg-226'. Proteolytically cleaves CPEB3 following neuronal stimulation which abolishes CPEB3 translational repressor activity, leading to translation of CPEB3 target mRNAs. This Sus scrofa (Pig) protein is Calpain-2 catalytic subunit (CAPN2).